Consider the following 229-residue polypeptide: Small ribosomal subunit protein uS2c (229 aa).

It belongs to the universal ribosomal protein uS2 family.

It is found in the plastid. The protein localises to the chloroplast. The sequence is that of Small ribosomal subunit protein uS2c (rps2) from Emiliania huxleyi (Coccolithophore).